A 246-amino-acid chain; its full sequence is Probable transcriptional regulatory protein CLJ_B3338 (246 aa).

This sequence belongs to the TACO1 family.

It is found in the cytoplasm. The chain is Probable transcriptional regulatory protein CLJ_B3338 from Clostridium botulinum (strain 657 / Type Ba4).